The following is a 372-amino-acid chain: MAGTDREKALDAALAQIERQFGKGAVMRMGDRSKEPIEVIPTGSTALDVALGVGGLPRGRVIEVYGPESSGKTTLTLHAVANAQKAGGQVAFVDAEHALDPEYAQKLGVDIDNLILSQPDNGEQALEIVDMLVRSGALDLIVIDSVAALVPRAEIEGEMGDSHVGLQARLMSQALRKITSALNQSKTTAIFINQLREKIGVMFGSPETTTGGRALKFYASVRLDIRRIETLKDGTDAVGNRTRVKVVKNKVAPPFKQAEFDILYGQGISREGGLIDMGVEHGFVRKAGAWYTYEGDQLGQGKENARNFLKDNPDLANEIEKKIKEKLGVGVRPEEPTATESGPDAATAESAPAVPAPATAKVTKAKAAAAKS.

Residue 66 to 73 (GPESSGKT) participates in ATP binding. The segment at 328–359 (GVGVRPEEPTATESGPDAATAESAPAVPAPAT) is disordered. Positions 345–359 (AATAESAPAVPAPAT) are enriched in low complexity.

The protein belongs to the RecA family.

Its subcellular location is the cytoplasm. Can catalyze the hydrolysis of ATP in the presence of single-stranded DNA, the ATP-dependent uptake of single-stranded DNA by duplex DNA, and the ATP-dependent hybridization of homologous single-stranded DNAs. It interacts with LexA causing its activation and leading to its autocatalytic cleavage. In Streptomyces ambofaciens, this protein is Protein RecA.